Reading from the N-terminus, the 307-residue chain is Protoheme IX farnesyltransferase (307 aa).

8 consecutive transmembrane segments (helical) span residues 32–52, 65–85, 108–128, 131–151, 158–178, 186–206, 251–271, and 287–307; these read MGIV…ALHF, FFTI…NNYI, PGFA…FLLL, PMAV…YSLW, LNTV…WAAI, IAWM…LALA, LGIT…VLGF, and FVYS…VTFF.

The protein belongs to the UbiA prenyltransferase family. Protoheme IX farnesyltransferase subfamily. As to quaternary structure, interacts with CtaA.

It is found in the cell membrane. The enzyme catalyses heme b + (2E,6E)-farnesyl diphosphate + H2O = Fe(II)-heme o + diphosphate. The protein operates within porphyrin-containing compound metabolism; heme O biosynthesis; heme O from protoheme: step 1/1. Functionally, converts heme B (protoheme IX) to heme O by substitution of the vinyl group on carbon 2 of heme B porphyrin ring with a hydroxyethyl farnesyl side group. The polypeptide is Protoheme IX farnesyltransferase (Bacillus anthracis (strain A0248)).